A 102-amino-acid polypeptide reads, in one-letter code: MFQPIYRSNLVIVITLFVSLSYYHTCFVRKRAHIIVQILLCQLFILSCNRSITLLTAWRYLHVMSLILQRCGIIVLKIKLLFGSDVKIFMLLNYGVIKFFSK.

A helical membrane pass occupies residues 5–27 (IYRSNLVIVITLFVSLSYYHTCF).

The protein resides in the host membrane. This is an uncharacterized protein from Microplitis demolitor (Parasitoid wasp).